Here is a 386-residue protein sequence, read N- to C-terminus: Agamous-like MADS-box protein AGL30 (386 aa).

The MADS-box domain maps to 1–53; that stretch reads MGRVKLKIKKLENTNGRQSTFAKRKNGILKKANELSILCDIDIVLLMFSPTGK. Residues 341-360 form a disordered region; it reads PDSSAYNDNTNQTRFGSSSS. A compositionally biased stretch (polar residues) spans 344 to 356; that stretch reads SAYNDNTNQTRFG.

Forms heterodimers with AGL66 and AGL104. In terms of tissue distribution, expressed in pollen.

Its subcellular location is the nucleus. Its function is as follows. Probable transcription factor that forms heterodimers with the MADS-box proteins AGL66 and AGL104 and is involved in the regulation of pollen maturation at the late stages of pollen development and pollen tube growth. The chain is Agamous-like MADS-box protein AGL30 from Arabidopsis thaliana (Mouse-ear cress).